The sequence spans 722 residues: Zinc finger BED domain-containing protein RICESLEEPER 1 (722 aa).

The BED-type zinc finger occupies 66 to 126 (RKKSLVWEHF…GSCPKIKNQE (61 aa)). 4 residues coordinate Zn(2+): Cys-89, Cys-92, His-113, and Cys-119. Positions 572–592 (VEQGGGNNAPASENSTQATAP) are disordered. The span at 580-592 (APASENSTQATAP) shows a compositional bias: polar residues. The interval 617–702 (ELEQYLDESL…EALVCAKDWL (86 aa)) is HATC (Hobo-Ac-Tam3) domain.

In terms of assembly, homodimer.

Its subcellular location is the nucleus. Functionally, transposase-like protein that is essential for plant growth and development. May regulate global gene expression by recruiting other cellular factors. The polypeptide is Zinc finger BED domain-containing protein RICESLEEPER 1 (Oryza sativa subsp. japonica (Rice)).